A 308-amino-acid chain; its full sequence is Cytochrome b (308 aa).

4 helical membrane passes run 1–21 (FGSL…LLAM), 45–66 (WLIR…YLHI), 81–101 (WNIG…GYVL), and 146–166 (FFAL…IHLT). Histidine 51 and histidine 65 together coordinate heme b. Heme b-binding residues include histidine 150 and histidine 164. Histidine 169 contributes to the a ubiquinone binding site. 3 helical membrane passes run 194–214 (TKDA…AMFS), 256–276 (LGGV…PLLH), and 288–308 (LSQF…WIGS).

This sequence belongs to the cytochrome b family. As to quaternary structure, the cytochrome bc1 complex contains 11 subunits: 3 respiratory subunits (MT-CYB, CYC1 and UQCRFS1), 2 core proteins (UQCRC1 and UQCRC2) and 6 low-molecular weight proteins (UQCRH/QCR6, UQCRB/QCR7, UQCRQ/QCR8, UQCR10/QCR9, UQCR11/QCR10 and a cleavage product of UQCRFS1). This cytochrome bc1 complex then forms a dimer. Heme b is required as a cofactor.

The protein resides in the mitochondrion inner membrane. Its function is as follows. Component of the ubiquinol-cytochrome c reductase complex (complex III or cytochrome b-c1 complex) that is part of the mitochondrial respiratory chain. The b-c1 complex mediates electron transfer from ubiquinol to cytochrome c. Contributes to the generation of a proton gradient across the mitochondrial membrane that is then used for ATP synthesis. The chain is Cytochrome b (MT-CYB) from Zaratornis stresemanni (White-cheeked cotinga).